The primary structure comprises 240 residues: Fatty acid metabolism regulator protein (240 aa).

The region spanning 6–74 is the HTH gntR-type domain; sequence KGPASFAEKY…HGKPTRVNNF (69 aa). A DNA-binding region (H-T-H motif) is located at residues 34-53; sequence ERELSELIGVTRTTLREVLQ.

Homodimer.

It localises to the cytoplasm. Functionally, multifunctional regulator of fatty acid metabolism. The protein is Fatty acid metabolism regulator protein of Shewanella amazonensis (strain ATCC BAA-1098 / SB2B).